The chain runs to 454 residues: Bifunctional protein GlmU (454 aa).

Residues methionine 1–proline 228 are pyrophosphorylase. Residues leucine 10–glycine 13, lysine 24, glutamine 76, glycine 81–threonine 82, tyrosine 103–aspartate 105, glycine 138, glutamate 153, asparagine 168, and asparagine 226 each bind UDP-N-acetyl-alpha-D-glucosamine. A Mg(2+)-binding site is contributed by aspartate 105. Asparagine 226 is a binding site for Mg(2+). The tract at residues tryptophan 229–glutamine 249 is linker. Residues glycine 250–lysine 454 are N-acetyltransferase. The UDP-N-acetyl-alpha-D-glucosamine site is built by arginine 332 and lysine 350. Histidine 362 functions as the Proton acceptor in the catalytic mechanism. Positions 365 and 376 each coordinate UDP-N-acetyl-alpha-D-glucosamine. Acetyl-CoA-binding positions include alanine 379, asparagine 385–tyrosine 386, serine 404, alanine 422, and arginine 439.

It in the N-terminal section; belongs to the N-acetylglucosamine-1-phosphate uridyltransferase family. In the C-terminal section; belongs to the transferase hexapeptide repeat family. As to quaternary structure, homotrimer. Requires Mg(2+) as cofactor.

Its subcellular location is the cytoplasm. The catalysed reaction is alpha-D-glucosamine 1-phosphate + acetyl-CoA = N-acetyl-alpha-D-glucosamine 1-phosphate + CoA + H(+). The enzyme catalyses N-acetyl-alpha-D-glucosamine 1-phosphate + UTP + H(+) = UDP-N-acetyl-alpha-D-glucosamine + diphosphate. It participates in nucleotide-sugar biosynthesis; UDP-N-acetyl-alpha-D-glucosamine biosynthesis; N-acetyl-alpha-D-glucosamine 1-phosphate from alpha-D-glucosamine 6-phosphate (route II): step 2/2. Its pathway is nucleotide-sugar biosynthesis; UDP-N-acetyl-alpha-D-glucosamine biosynthesis; UDP-N-acetyl-alpha-D-glucosamine from N-acetyl-alpha-D-glucosamine 1-phosphate: step 1/1. The protein operates within bacterial outer membrane biogenesis; LPS lipid A biosynthesis. Functionally, catalyzes the last two sequential reactions in the de novo biosynthetic pathway for UDP-N-acetylglucosamine (UDP-GlcNAc). The C-terminal domain catalyzes the transfer of acetyl group from acetyl coenzyme A to glucosamine-1-phosphate (GlcN-1-P) to produce N-acetylglucosamine-1-phosphate (GlcNAc-1-P), which is converted into UDP-GlcNAc by the transfer of uridine 5-monophosphate (from uridine 5-triphosphate), a reaction catalyzed by the N-terminal domain. The sequence is that of Bifunctional protein GlmU from Xanthomonas campestris pv. campestris (strain 8004).